The primary structure comprises 265 residues: 4-hydroxy-tetrahydrodipicolinate reductase (265 aa).

Position 9-14 (9-14) interacts with NAD(+); it reads GARGKM. Lys37 contacts NADP(+). NAD(+) contacts are provided by residues 99–101 and 125–128; these read GTT and APNF. His155 (proton donor/acceptor) is an active-site residue. Residue His156 coordinates (S)-2,3,4,5-tetrahydrodipicolinate. The active-site Proton donor is Lys159. (S)-2,3,4,5-tetrahydrodipicolinate is bound at residue 165 to 166; sequence GT.

Belongs to the DapB family.

It is found in the cytoplasm. It catalyses the reaction (S)-2,3,4,5-tetrahydrodipicolinate + NAD(+) + H2O = (2S,4S)-4-hydroxy-2,3,4,5-tetrahydrodipicolinate + NADH + H(+). It carries out the reaction (S)-2,3,4,5-tetrahydrodipicolinate + NADP(+) + H2O = (2S,4S)-4-hydroxy-2,3,4,5-tetrahydrodipicolinate + NADPH + H(+). Its pathway is amino-acid biosynthesis; L-lysine biosynthesis via DAP pathway; (S)-tetrahydrodipicolinate from L-aspartate: step 4/4. In terms of biological role, catalyzes the conversion of 4-hydroxy-tetrahydrodipicolinate (HTPA) to tetrahydrodipicolinate. In Lysinibacillus sphaericus (strain C3-41), this protein is 4-hydroxy-tetrahydrodipicolinate reductase.